The sequence spans 259 residues: Phosphate import ATP-binding protein PstB (259 aa).

The 245-residue stretch at 10–254 (AESRNLSFYY…PSRKETEDYI (245 aa)) folds into the ABC transporter domain. Residue 43 to 50 (GPSGCGKS) participates in ATP binding.

The protein belongs to the ABC transporter superfamily. Phosphate importer (TC 3.A.1.7) family. The complex is composed of two ATP-binding proteins (PstB), two transmembrane proteins (PstC and PstA) and a solute-binding protein (PstS).

The protein resides in the cell inner membrane. The catalysed reaction is phosphate(out) + ATP + H2O = ADP + 2 phosphate(in) + H(+). Functionally, part of the ABC transporter complex PstSACB involved in phosphate import. Responsible for energy coupling to the transport system. This chain is Phosphate import ATP-binding protein PstB, found in Methylobacillus flagellatus (strain ATCC 51484 / DSM 6875 / VKM B-1610 / KT).